The primary structure comprises 291 residues: ATP synthase gamma chain (291 aa).

Belongs to the ATPase gamma chain family. As to quaternary structure, F-type ATPases have 2 components, CF(1) - the catalytic core - and CF(0) - the membrane proton channel. CF(1) has five subunits: alpha(3), beta(3), gamma(1), delta(1), epsilon(1). CF(0) has three main subunits: a, b and c.

It localises to the cell inner membrane. Produces ATP from ADP in the presence of a proton gradient across the membrane. The gamma chain is believed to be important in regulating ATPase activity and the flow of protons through the CF(0) complex. In Burkholderia cenocepacia (strain ATCC BAA-245 / DSM 16553 / LMG 16656 / NCTC 13227 / J2315 / CF5610) (Burkholderia cepacia (strain J2315)), this protein is ATP synthase gamma chain.